The primary structure comprises 1039 residues: Multidrug resistance protein MdtB (1039 aa).

The next 11 helical transmembrane spans lie at 15–37 (LFIM…GIIG), 345–362 (FELM…YLFL), 367–389 (ATII…MVFL), 396–418 (LTLM…VIEN), 438–460 (GEIG…PLLF), 472–494 (FAIT…TPMM), 535–557 (HPWL…WVFI), 866–888 (VWLI…ESFI), 908–930 (LMIA…IGIV), 967–989 (ILMT…GVGA), and 999–1021 (MVGG…YLLF).

Belongs to the resistance-nodulation-cell division (RND) (TC 2.A.6) family. MdtB subfamily. As to quaternary structure, part of a tripartite efflux system composed of MdtA, MdtB and MdtC. MdtB forms a heteromultimer with MdtC.

It is found in the cell inner membrane. In Shigella flexneri, this protein is Multidrug resistance protein MdtB.